The sequence spans 246 residues: MLNLQNVIINPLFEISEVSVGEHYYWEIAGYEVHGQVLLTSWFVLGTVILFGLIANKDLKPLPEGLQNFSELVTEFIRDLAKTQVGEEEYLKWVPFIGTIFIFVLVSNWSGALLPWRLIEIPNGELAAPTNDINTTVALALLTSISYFYAGIRKKGLGYFKRYVQPAVFLLPINVLEDFSKPLSLSFRLFGNILADELVVGVLVALVPLIVPIPVMLLGVFTSAIQALVFATLAGAYIGESVEDHH.

The next 5 helical transmembrane spans lie at 35–55 (GQVL…GLIA), 94–114 (VPFI…GALL), 132–152 (DINT…YAGI), 198–218 (LVVG…VMLL), and 219–239 (GVFT…AYIG).

Belongs to the ATPase A chain family. F-type ATPases have 2 components, CF(1) - the catalytic core - and CF(0) - the membrane proton channel. CF(1) has five subunits: alpha(3), beta(3), gamma(1), delta(1), epsilon(1). CF(0) has four main subunits: a, b, b' and c.

The protein localises to the plastid. It localises to the chloroplast thylakoid membrane. Key component of the proton channel; it plays a direct role in the translocation of protons across the membrane. The sequence is that of ATP synthase subunit a, chloroplastic from Stigeoclonium helveticum (Green alga).